Here is a 143-residue protein sequence, read N- to C-terminus: Large ribosomal subunit protein uL11 (143 aa).

This sequence belongs to the universal ribosomal protein uL11 family. In terms of assembly, part of the ribosomal stalk of the 50S ribosomal subunit. Interacts with L10 and the large rRNA to form the base of the stalk. L10 forms an elongated spine to which L12 dimers bind in a sequential fashion forming a multimeric L10(L12)X complex. In terms of processing, one or more lysine residues are methylated.

Forms part of the ribosomal stalk which helps the ribosome interact with GTP-bound translation factors. The polypeptide is Large ribosomal subunit protein uL11 (Salinispora tropica (strain ATCC BAA-916 / DSM 44818 / JCM 13857 / NBRC 105044 / CNB-440)).